The chain runs to 489 residues: Netrin-5 (489 aa).

The first 16 residues, 1 to 16 (MPVTFALLLLLGQATA), serve as a signal peptide directing secretion. A glycan (N-linked (GlcNAc...) asparagine) is linked at Asn-62. Intrachain disulfides connect Cys-157–Cys-166, Cys-159–Cys-175, Cys-177–Cys-186, Cys-189–Cys-209, Cys-212–Cys-221, Cys-214–Cys-239, Cys-242–Cys-251, Cys-254–Cys-272, Cys-275–Cys-287, Cys-277–Cys-294, Cys-296–Cys-305, Cys-308–Cys-322, Cys-345–Cys-418, Cys-349–Cys-420, and Cys-364–Cys-475. 3 Laminin EGF-like domains span residues 157–211 (CQCH…PCLP), 212–274 (CSCN…ACRA), and 275–324 (CQCH…PCQR). An NTR domain is found at 345 to 475 (CQNYCNMSDT…LQQEERAGGC (131 aa)). The disordered stretch occupies residues 470–489 (ERAGGCRGVRAPTPSPRPEH).

Its subcellular location is the secreted. Plays a role in neurogenesis. Prevents motor neuron cell body migration out of the neural tube. The polypeptide is Netrin-5 (NTN5) (Homo sapiens (Human)).